The primary structure comprises 435 residues: Trigger factor (435 aa).

One can recognise a PPIase FKBP-type domain in the interval 161–246 (DDQVTLDFEG…LTKVEEQILP (86 aa)).

It belongs to the FKBP-type PPIase family. Tig subfamily.

Its subcellular location is the cytoplasm. It carries out the reaction [protein]-peptidylproline (omega=180) = [protein]-peptidylproline (omega=0). Its function is as follows. Involved in protein export. Acts as a chaperone by maintaining the newly synthesized protein in an open conformation. Functions as a peptidyl-prolyl cis-trans isomerase. The sequence is that of Trigger factor from Psychromonas ingrahamii (strain DSM 17664 / CCUG 51855 / 37).